The primary structure comprises 378 residues: E3 ubiquitin-protein ligase ATL9 (378 aa).

An N-terminal signal peptide occupies residues 1–33 (MAILDTKSSRWIPHNLLFLLLLLLLQSVPYGFG). The chain crosses the membrane as a helical span at residues 51 to 71 (VVVVITVLFLVIFFMVFGSIF). Residues 135–177 (CAVCLCEFEDDETLRLMPPCCHVFHADCVDVWLSEHSTCPLCR) form an RING-type; atypical zinc finger. Disordered regions lie at residues 187–211 (DDDDSTESYSGTDPGTISSSTDPER), 300–326 (ARSSRSGYRSGSVGSERSAFPYGRKSN), and 350–378 (FSGDAPKNLPTSIEAGERSFERLRPDERV). Residues 193-207 (ESYSGTDPGTISSST) show a composition bias toward polar residues. The span at 301–317 (RSSRSGYRSGSVGSERS) shows a compositional bias: low complexity. The segment covering 364–378 (AGERSFERLRPDERV) has biased composition (basic and acidic residues).

It belongs to the RING-type zinc finger family. ATL subfamily.

The protein localises to the membrane. It catalyses the reaction S-ubiquitinyl-[E2 ubiquitin-conjugating enzyme]-L-cysteine + [acceptor protein]-L-lysine = [E2 ubiquitin-conjugating enzyme]-L-cysteine + N(6)-ubiquitinyl-[acceptor protein]-L-lysine.. Its pathway is protein modification; protein ubiquitination. Functionally, E3 ubiquitin-protein ligase able to catalyze polyubiquitination with ubiquitin-conjugating enzyme E2 UBC8 in vitro. May be involved in the early steps of the plant defense signaling pathway. The chain is E3 ubiquitin-protein ligase ATL9 (ATL9) from Arabidopsis thaliana (Mouse-ear cress).